Here is a 501-residue protein sequence, read N- to C-terminus: MEALLQLKGIDKAFPGVKALSGAALNVYPGRVMALVGENGAGKSTMMKVLTGIYTRDAGTLLWLGKETTFTGPKSSQEAGIGIIHQELNLIPQLTIAENIFLGREFVNRFGKIDWKTMYAEADKLLAKLNLRFKSDKLVGDLSIGDQQMVEIAKVLSFESKVIIMDEPTDALTDTETESLFRVIRELKSQGRGIVYISHRMKEIFESCDDVTVFRDGQFIAEREVASLTEDSLIEMMVGRKLEDQYPHLDKAPGDIRLKVDNLCGPGVNDVSFTLRKGEILGVSGLMGAGRTELMKVLYGALPRTSGYVTLDGHEVVTRSPQDGLANGIVYISEDRKRDGLVLGMSVKENMSLTALRYFSRAGGSLKHADEQQAVSDFIRLFNVKTPSMEQAIGLLSGGNQQKVAIARGLMTRPKVLILDEPTRGVDVGAKKEIYQLINQFKADGLSIILVSSEMPEVLGMSDRIIVMHEGHLSGEFTREQATQEVLMAAAVGKLNRVNQE.

ABC transporter domains are found at residues 5–241 and 252–495; these read LQLK…VGRK and APGD…VGKL. Residue 37 to 44 coordinates ATP; sequence GENGAGKS.

This sequence belongs to the ABC transporter superfamily. Ribose importer (TC 3.A.1.2.1) family. In terms of assembly, the complex is composed of an ATP-binding protein (RbsA), two transmembrane proteins (RbsC) and a solute-binding protein (RbsB).

The protein localises to the cell inner membrane. It catalyses the reaction D-ribose(out) + ATP + H2O = D-ribose(in) + ADP + phosphate + H(+). Functionally, part of the ABC transporter complex RbsABC involved in ribose import. Responsible for energy coupling to the transport system. In Escherichia coli O157:H7, this protein is Ribose import ATP-binding protein RbsA 1.